The primary structure comprises 320 residues: Annexin A5 (320 aa).

At Ala-2 the chain carries N-acetylalanine. Annexin repeat units lie at residues 15-86 (FDER…ALMK), 87-158 (PSRL…VLLQ), 170-242 (AQVE…AVVK), and 246-317 (SIPA…LLCG). Lys-29 is covalently cross-linked (Glycyl lysine isopeptide (Lys-Gly) (interchain with G-Cter in SUMO1); alternate). Lys-29 participates in a covalent cross-link: Glycyl lysine isopeptide (Lys-Gly) (interchain with G-Cter in SUMO2); alternate. Residue Ser-37 is modified to Phosphoserine. Residues Lys-70, Lys-76, Lys-79, Lys-97, and Lys-101 each carry the N6-acetyllysine modification. Lys-290 carries the N6-succinyllysine modification. The short motif at 314–319 (LLCGED) is the [IL]-x-C-x-x-[DE] motif element.

Belongs to the annexin family. In terms of assembly, monomer. Binds ATRX and EIF5B. Interacts with hepatitis B virus (HBV). S-nitrosylation is induced by interferon-gamma and oxidatively-modified low-densitity lipoprotein (LDL(ox)) possibly implicating the iNOS-S100A8/9 transnitrosylase complex.

Its function is as follows. This protein is an anticoagulant protein that acts as an indirect inhibitor of the thromboplastin-specific complex, which is involved in the blood coagulation cascade. The sequence is that of Annexin A5 (ANXA5) from Homo sapiens (Human).